A 350-amino-acid polypeptide reads, in one-letter code: 3-dehydroquinate synthase (350 aa).

Residues 106 to 110 (GVIGD), 130 to 131 (TS), K143, and K152 each bind NAD(+). The Zn(2+) site is built by E185, H246, and H263.

It belongs to the sugar phosphate cyclases superfamily. Dehydroquinate synthase family. It depends on Co(2+) as a cofactor. The cofactor is Zn(2+). Requires NAD(+) as cofactor.

The protein localises to the cytoplasm. The enzyme catalyses 7-phospho-2-dehydro-3-deoxy-D-arabino-heptonate = 3-dehydroquinate + phosphate. Its pathway is metabolic intermediate biosynthesis; chorismate biosynthesis; chorismate from D-erythrose 4-phosphate and phosphoenolpyruvate: step 2/7. Functionally, catalyzes the conversion of 3-deoxy-D-arabino-heptulosonate 7-phosphate (DAHP) to dehydroquinate (DHQ). This chain is 3-dehydroquinate synthase, found in Clostridium beijerinckii (strain ATCC 51743 / NCIMB 8052) (Clostridium acetobutylicum).